The primary structure comprises 358 residues: tRNA-specific 2-thiouridylase MnmA (358 aa).

Residues 6–13 and M32 each bind ATP; that span reads ALSGGVDS. The Nucleophile role is filled by C103. A disulfide bridge links C103 with C201. Residue G127 participates in ATP binding. The interaction with tRNA stretch occupies residues 151-153; that stretch reads KDQ. C201 acts as the Cysteine persulfide intermediate in catalysis.

Belongs to the MnmA/TRMU family.

It is found in the cytoplasm. It carries out the reaction S-sulfanyl-L-cysteinyl-[protein] + uridine(34) in tRNA + AH2 + ATP = 2-thiouridine(34) in tRNA + L-cysteinyl-[protein] + A + AMP + diphosphate + H(+). Catalyzes the 2-thiolation of uridine at the wobble position (U34) of tRNA, leading to the formation of s(2)U34. The polypeptide is tRNA-specific 2-thiouridylase MnmA (Thermotoga sp. (strain RQ2)).